A 384-amino-acid chain; its full sequence is PqqA peptide cyclase (384 aa).

The region spanning 5–220 (VGLPLWLLAE…TNEYREKLKA (216 aa)) is the Radical SAM core domain. [4Fe-4S] cluster contacts are provided by cysteine 19, cysteine 23, and cysteine 26.

This sequence belongs to the radical SAM superfamily. PqqE family. In terms of assembly, interacts with PqqD. The interaction is necessary for activity of PqqE. It depends on [4Fe-4S] cluster as a cofactor.

The catalysed reaction is [PQQ precursor protein] + S-adenosyl-L-methionine = E-Y cross-linked-[PQQ precursor protein] + 5'-deoxyadenosine + L-methionine + H(+). Its pathway is cofactor biosynthesis; pyrroloquinoline quinone biosynthesis. Catalyzes the cross-linking of a glutamate residue and a tyrosine residue in the PqqA protein as part of the biosynthesis of pyrroloquinoline quinone (PQQ). This is PqqA peptide cyclase from Acinetobacter baumannii (strain ACICU).